Reading from the N-terminus, the 183-residue chain is Ribosome rescue factor SmrB (183 aa).

The Smr domain maps to 98–173 (LDLHGLTQLQ…GDAALLVLIE (76 aa)).

This sequence belongs to the SmrB family. Associates with collided ribosomes, but not with correctly translating polysomes.

In terms of biological role, acts as a ribosome collision sensor. Detects stalled/collided disomes (pairs of ribosomes where the leading ribosome is stalled and a second ribosome has collided with it) and endonucleolytically cleaves mRNA at the 5' boundary of the stalled ribosome. Stalled/collided disomes form a new interface (primarily via the 30S subunits) that binds SmrB. Cleaved mRNA becomes available for tmRNA ligation, leading to ribosomal subunit dissociation and rescue of stalled ribosomes. The sequence is that of Ribosome rescue factor SmrB from Escherichia coli O157:H7.